A 953-amino-acid polypeptide reads, in one-letter code: Nucleotide-binding oligomerization domain-containing protein 1 (953 aa).

The 91-residue stretch at 15 to 105 folds into the CARD domain; sequence ESHPHIQLLK…AYVDLRPWLL (91 aa). Residues 196-531 form the NACHT domain; sequence ETIFILGDAG…AFFTAFFLVL (336 aa). 202–209 is an ATP binding site; it reads GDAGVGKS. 2 S-palmitoyl cysteine lipidation sites follow: C558 and C567. 9 LRR repeats span residues 632 to 656, 702 to 725, 727 to 750, 755 to 778, 783 to 806, 839 to 862, 867 to 891, 895 to 918, and 923 to 946; these read LKSL…IWML, FPKR…ELQP, FSRL…VLSE, YKIV…YVTK, CKGL…YLAL, HPSL…SLAR, NTSL…LAEM, NQTL…QLAD, and NTGI…VYED. Residue C952 is the site of S-palmitoyl cysteine attachment.

Belongs to the NOD1-NOD2 family. As to quaternary structure, homooligomer: homooligomerizes following ligand-binding, promoting RIPK2 recruitment. Interacts (via CARD domain) with RIPK2 (via CARD domain). Following RIPK2 recruitment, RIPK2 homooligomerizes via its CARD domain and forms long filaments named RIPosomes. Interacts with ARHGEF2. Interacts (via CARD domain) with ubiquitin; inhibiting interaction with RIPK2. Interacts with NLRP10 and recruits it to the cell membrane following invasive bacterial infection. Interacts with IFIH1; this interaction promotes transcription of antiviral genes and inhibition of viral replication. Interacts with IRGM; promoting NOD1 degradation. Interacts with ATG16L1. Palmitoylated. Palmitoylation is required for proper recruitment to the bacterial entry site and hence for proper signaling upon cognate peptidoglycan detection. In terms of processing, ubiquitinated. 'Lys-48'-linked polyubiquitination by RNF34 promotes proteasomal degradation and thereby negatively regulates NOD1 for instance in NF-kappa-B activation. Post-translationally, degraded via selective autophagy following interaction with IRGM. IRGM promotes NOD1-RIPK2 RIPosome recruitment to autophagosome membranes, promoting their SQSTM1/p62-dependent autophagic degradation. As to expression, highly expressed in adult heart, skeletal muscle, pancreas, spleen and ovary. Also detected in placenta, lung, liver, kidney, thymus, testis, small intestine and colon.

The protein localises to the cell membrane. It localises to the apical cell membrane. The protein resides in the basolateral cell membrane. Its subcellular location is the cytoplasm. Pattern recognition receptor (PRR) that detects bacterial peptidoglycan fragments and other danger signals and thus participates in both innate and adaptive immune responses. Specifically recognizes and binds gamma-D-glutamyl-meso-diaminopimelic acid (iE-DAP), a dipeptide present in peptidoglycan of Gram-negative bacteria. Preferentially binds iE-DAP in tripeptide-containing muropeptides (MurNAc-TriDAP or TriDAP). Ligand binding triggers oligomerization that facilitates the binding and subsequent activation of the proximal adapter receptor-interacting RIPK2. Following recruitment, RIPK2 undergoes 'Met-1'- (linear) and 'Lys-63'-linked polyubiquitination by E3 ubiquitin-protein ligases XIAP, BIRC2, BIRC3 and the LUBAC complex, becoming a scaffolding protein for downstream effectors, triggering activation of the NF-kappa-B and MAP kinases signaling. This in turn leads to the transcriptional activation of hundreds of genes involved in immune response. Also acts as a regulator of antiviral response elicited by dsRNA and the expression of RLR pathway members by targeting IFIH1 and TRAF3 to modulate the formation of IFIH1-MAVS and TRAF3-MAVS complexes leading to increased transcription of type I IFNs. Also acts as a regulator of autophagy via its interaction with ATG16L1, possibly by recruiting ATG16L1 at the site of bacterial entry. Besides recognizing pathogens, also involved in the endoplasmic reticulum stress response: acts by sensing and binding to the cytosolic metabolite sphingosine-1-phosphate generated in response to endoplasmic reticulum stress, initiating an inflammation process that leads to activation of the NF-kappa-B and MAP kinases signaling. In addition, plays a role in insulin trafficking in beta cells in a cell-autonomous manner. Mechanistically, upon recognizing cognate ligands, NOD1 and RIPK2 localize to insulin vesicles where they recruit RAB1A to direct insulin trafficking through the cytoplasm. Its function is as follows. In contrast to isoform 1, does not efficiently recognize and bind gamma-D-glutamyl-meso-diaminopimelic acid (iE-DAP) ligand. In Homo sapiens (Human), this protein is Nucleotide-binding oligomerization domain-containing protein 1.